We begin with the raw amino-acid sequence, 319 residues long: UDP-3-O-acylglucosamine N-acyltransferase (319 aa).

The active-site Proton acceptor is the His-230.

The protein belongs to the transferase hexapeptide repeat family. LpxD subfamily. In terms of assembly, homotrimer.

The catalysed reaction is a UDP-3-O-[(3R)-3-hydroxyacyl]-alpha-D-glucosamine + a (3R)-hydroxyacyl-[ACP] = a UDP-2-N,3-O-bis[(3R)-3-hydroxyacyl]-alpha-D-glucosamine + holo-[ACP] + H(+). Its pathway is bacterial outer membrane biogenesis; LPS lipid A biosynthesis. Catalyzes the N-acylation of UDP-3-O-acylglucosamine using 3-hydroxyacyl-ACP as the acyl donor. Is involved in the biosynthesis of lipid A, a phosphorylated glycolipid that anchors the lipopolysaccharide to the outer membrane of the cell. This Campylobacter lari (strain RM2100 / D67 / ATCC BAA-1060) protein is UDP-3-O-acylglucosamine N-acyltransferase.